The sequence spans 37 residues: Large ribosomal subunit protein bL36 (37 aa).

This sequence belongs to the bacterial ribosomal protein bL36 family.

This is Large ribosomal subunit protein bL36 from Bacillus anthracis (strain A0248).